We begin with the raw amino-acid sequence, 123 residues long: MASSGQLLKLVCLVAVMCCMAVGGPKAMAAVSCGQVVNNLTPCINYVANGGALNPSCCTGVRSLYSLAQTTADRQSICNCLKQAVNGIPYTNANAGLAAGLPGKCGVNIPYKISPSTDCKSIK.

The signal sequence occupies residues 1-25 (MASSGQLLKLVCLVAVMCCMAVGGP). Cystine bridges form between Cys33–Cys80, Cys43–Cys57, Cys58–Cys105, and Cys78–Cys119.

Belongs to the plant LTP family.

In terms of biological role, plant non-specific lipid-transfer proteins transfer phospholipids as well as galactolipids across membranes. May play a role in wax or cutin deposition in the cell walls of expanding epidermal cells and certain secretory tissues. The protein is Non-specific lipid-transfer protein 3 of Prunus dulcis (Almond).